The chain runs to 995 residues: MNVTKPATQRPKLPSVGRLGLVDALAGARLAELGWTEHDDQAHVDLLWSLSRAPDADAALKVLVRLAENPDTGWDELNAALLNERSLRGRLFAVLGSSLSLGDHLVANPQSWKLLRGKVALPSHAALLESFVDLAEEVAAAPASAVHRLRALHRDHVLVLAGLDLAATVEDEPVLPFTVVAAHLADIADAALAAALRLAEKTVCRDRTPPRLAVIAMGKCGARELNYVSDVDVIFVAERADPISIRVAGEMMRVASSTFFEVDAGLRPEGRSGELVRTVESHIAYYQRWAKTWEFQALLKARAAVGDAELGQSYLAALMPMVWTACERDDFVAEVQAMRRRVEQLVPADIRGRELKLGTGGLRDVEFVAQLLQLVHGRSDESLHVASTVDALSALGEGGYIGREDAANMIASYEFLRLLEHRLQLQRLKRTHLLPEFDDEEAVRWLARAAHIRPDGRHDAAGMLREELKHQNVRVSRLHAKLFYQPLLESIAPAGLEIAGRGMTSEAAERQLAALGYEGPQTALKHMAALVNHSGRRARVQSVLLPRLLDWLSYAPDPDGGLLAYRRLSEALATQSWYLSTLRDKPTVGRRLMHVLGTSAFVPDLLMRAPEVIQNYGDGRTGPKLLETEPAAVARALIASAGRYSDPLRAIAAARTLRRRELARIGSADLLGLLEVTEVCRALTSVWVAVLQSALEAMIRANTPEGGRPLARIAVIGMGRLGGSELSYGSDADVMYVCEPASGVTDAQAVKWSTAVAEQVRAKLGTPSVDPPLEVDANLRPEGRNGPLVRTLASYEAYYAQWAQAWEIQALLRAHAVAGDAELGQRFLLLVDHTRYPPDGVSAEAVHEIRRIKARVESERLPRGADPNTHTKLGRGGLADIEWTVQLLQLQNAHEIEALHNTSTLESLDAIAEAKLVAEDEVKLLRQAWLTATRARNALVLVRGKPTDQLPGPGRQLNAVAVAAGWHNDDGGEFLDNYLRVTRRAKAVVRKVFGS.

The adenylyl removase stretch occupies residues 1-487 (MNVTKPATQR…LHAKLFYQPL (487 aa)). The segment at 492 to 995 (APAGLEIAGR…KAVVRKVFGS (504 aa)) is adenylyl transferase.

This sequence belongs to the GlnE family. Mg(2+) is required as a cofactor.

The catalysed reaction is [glutamine synthetase]-O(4)-(5'-adenylyl)-L-tyrosine + phosphate = [glutamine synthetase]-L-tyrosine + ADP. The enzyme catalyses [glutamine synthetase]-L-tyrosine + ATP = [glutamine synthetase]-O(4)-(5'-adenylyl)-L-tyrosine + diphosphate. In terms of biological role, involved in the regulation of glutamine synthetase GlnA, a key enzyme in the process to assimilate ammonia. When cellular nitrogen levels are high, the C-terminal adenylyl transferase (AT) inactivates GlnA by covalent transfer of an adenylyl group from ATP to specific tyrosine residue of GlnA, thus reducing its activity. Conversely, when nitrogen levels are low, the N-terminal adenylyl removase (AR) activates GlnA by removing the adenylyl group by phosphorolysis, increasing its activity. The regulatory region of GlnE binds the signal transduction protein PII (GlnB) which indicates the nitrogen status of the cell. The sequence is that of Bifunctional glutamine synthetase adenylyltransferase/adenylyl-removing enzyme from Mycobacterium marinum (strain ATCC BAA-535 / M).